We begin with the raw amino-acid sequence, 345 residues long: V-type proton ATPase subunit d (345 aa).

Met1 carries the post-translational modification N-acetylmethionine.

Belongs to the V-ATPase V0D/AC39 subunit family. V-ATPase is a heteromultimeric enzyme composed of a peripheral catalytic V1 complex (components A to H) attached to an integral membrane V0 proton pore complex (components: a, c, c', c'', d, e, f and VOA1).

The protein resides in the vacuole membrane. Subunit of the V0 complex of vacuolar(H+)-ATPase (V-ATPase), a multisubunit enzyme composed of a peripheral complex (V1) that hydrolyzes ATP and a membrane integral complex (V0) that translocates protons. V-ATPase is responsible for acidifying and maintaining the pH of intracellular compartments. This subunit is a non-integral membrane component of the membrane pore domain and is required for proper assembly of the V0 sector. Might be involved in the regulated assembly of V1 subunits onto the membrane sector or alternatively may prevent the passage of protons through V0 pores. The polypeptide is V-type proton ATPase subunit d (Saccharomyces cerevisiae (strain ATCC 204508 / S288c) (Baker's yeast)).